The primary structure comprises 298 residues: MEDYLVKALCYKGSIRAYAISATETVSEAQRRHDTWSSSTAALGRTLIGALLLGATLKGDDKLTVKVQGNGPAGAIIVDSNGRGETKGYIKNPHVSLKLNATGKIDVRGAVGNEGIFTVIKDLGLKETFSGQTPIVSGEIGEDFTYFMAVSEQVPSAIGLGVLVDTDESVKAAGGFMIQVMPGADESTIDFIEQRLAEVPPISQLLENGETPEQVLYRLLGEDEVEILEKMPVQFKCDCSKEKFATALIAVGIDELNAMIDEDHGAEAVCQFCNNKYHYSEEELIELRDEAIRNTKQK.

Intrachain disulfides connect Cys237/Cys239 and Cys270/Cys273.

This sequence belongs to the HSP33 family. In terms of processing, under oxidizing conditions two disulfide bonds are formed involving the reactive cysteines. Under reducing conditions zinc is bound to the reactive cysteines and the protein is inactive.

It localises to the cytoplasm. In terms of biological role, redox regulated molecular chaperone. Protects both thermally unfolding and oxidatively damaged proteins from irreversible aggregation. Plays an important role in the bacterial defense system toward oxidative stress. This is 33 kDa chaperonin from Enterococcus faecalis (strain ATCC 700802 / V583).